A 159-amino-acid chain; its full sequence is Phosphopantetheine adenylyltransferase (159 aa).

Threonine 10 serves as a coordination point for substrate. ATP is bound by residues 10 to 11 (TF) and histidine 18. 3 residues coordinate substrate: lysine 42, methionine 74, and arginine 88. ATP-binding positions include 89–91 (GLR), glutamate 99, and 124–130 (WSFISSS).

The protein belongs to the bacterial CoaD family. As to quaternary structure, homohexamer. The cofactor is Mg(2+).

It is found in the cytoplasm. The catalysed reaction is (R)-4'-phosphopantetheine + ATP + H(+) = 3'-dephospho-CoA + diphosphate. It participates in cofactor biosynthesis; coenzyme A biosynthesis; CoA from (R)-pantothenate: step 4/5. In terms of biological role, reversibly transfers an adenylyl group from ATP to 4'-phosphopantetheine, yielding dephospho-CoA (dPCoA) and pyrophosphate. This chain is Phosphopantetheine adenylyltransferase, found in Pectobacterium carotovorum subsp. carotovorum (strain PC1).